Reading from the N-terminus, the 707-residue chain is MAAAVAAAGRLGWLFAALCLGNAAGEAAPGPRVLGFCLEEDGAAGAGWVRGGAARDTPDATFLLRLFGPGFANSSWSWVAPEGAGCREEAASPAGEWRALLRLRLRAEAVRPHSALLAVRVEPGGGAAEEAAPPWALGLGAAGLLALAALARGLQLSALALAPAEVQVLRESGSEAERAAARRLEPARRWAGCALGALLLLASLAQAALAVLLYRAAGQRAVPAVLGSAGLVFLVGEVVPAAVSGRWTLALAPRALGLSRLAVLLTLPVALPVGQLLELAARPGRLRERVLELARGGGDPYSDLSKGVLRCRTVEDVLTPLEDCFMLDASTVLDFGVLASIMQSGHTRIPVYEEERSNIVDMLYLKDLAFVDPEDCTPLSTITRFYNHPLHFVFNDTKLDAVLEEFKRGKSHLAIVQKVNNEGEGDPFYEVLGLVTLEDVIEEIIRSEILDESEDYRDTVVKRKPASLMAPLKRKEEFSLFKVSDDEYKVTISPQLLLATQRFLSREVDVFSPLRISEKVLLHLLKHPSVNQEVRFDESNRLATHHYLYQRSQPVDYFILILQGRVEVEIGKEGLKFENGAFTYYGVSALTVPSSVHQSPVSSLQPIRHDLQPDPGDGTHSSAYCPDYTVRALSDLQLIKVTRLQYLNALLATRAQNLPQSPENTDLQVIPGSQTRLLGEKTTTAAGSSHSRPGVPVEGSPGRNPGV.

The helical transmembrane segment at Leu11–Ala27 threads the bilayer. Asn73 carries an N-linked (GlcNAc...) asparagine glycan. Positions Glu130–Val308 constitute a CNNM transmembrane domain. 3 helical membrane passes run Cys193–Leu213, Ala221–Ala241, and Leu261–Ala281. CBS domains lie at Leu318–Leu379 and Tyr386–Glu452. A Phosphoserine modification is found at Ser661. The span at Leu678–Ser691 shows a compositional bias: polar residues. Residues Leu678–Val707 form a disordered region. Residue Ser700 is modified to Phosphoserine.

The protein belongs to the ACDP family. In terms of tissue distribution, widely expressed. Expressed at higher level in heart and spleen.

It is found in the cell membrane. Its function is as follows. Probable metal transporter. This chain is Metal transporter CNNM3 (CNNM3), found in Homo sapiens (Human).